We begin with the raw amino-acid sequence, 153 residues long: Large ribosomal subunit protein uL30 (153 aa).

It belongs to the universal ribosomal protein uL30 family. As to quaternary structure, part of the 50S ribosomal subunit.

This Methanosarcina barkeri (strain Fusaro / DSM 804) protein is Large ribosomal subunit protein uL30.